A 1021-amino-acid chain; its full sequence is tRNA wybutosine-synthesizing protein 4 (1021 aa).

S-adenosyl-L-methionine is bound by residues Arg68, Asp122, 171 to 172, and Glu198; that span reads DL. Residues 826 to 980 form the JmjC domain; sequence PTEAPANLAE…STGRDVYGNR (155 aa).

It belongs to the methyltransferase superfamily. LCMT family.

It catalyses the reaction 7-[(3S)-3-amino-3-carboxypropyl]wyosine(37) in tRNA(Phe) + S-adenosyl-L-methionine = 7-[(3S)-(3-amino-3-methoxycarbonyl)propyl]wyosine(37) in tRNA(Phe) + S-adenosyl-L-homocysteine. The enzyme catalyses 7-[(3S)-(3-amino-3-methoxycarbonyl)propyl]wyosine(37) in tRNA(Phe) + S-adenosyl-L-methionine + CO2 = wybutosine(37) in tRNA(Phe) + S-adenosyl-L-homocysteine + 2 H(+). Its pathway is tRNA modification; wybutosine-tRNA(Phe) biosynthesis. Probable S-adenosyl-L-methionine-dependent methyltransferase that acts as a component of the wybutosine biosynthesis pathway. Wybutosine is a hyper modified guanosine with a tricyclic base found at the 3'-position adjacent to the anticodon of eukaryotic phenylalanine tRNA. May methylate the carboxyl group of leucine residues to form alpha-leucine ester residues. In Gibberella zeae (strain ATCC MYA-4620 / CBS 123657 / FGSC 9075 / NRRL 31084 / PH-1) (Wheat head blight fungus), this protein is tRNA wybutosine-synthesizing protein 4 (PPM2).